A 336-amino-acid polypeptide reads, in one-letter code: tRNA N6-adenosine threonylcarbamoyltransferase (336 aa).

Fe cation-binding residues include His-114 and His-118. Residues 136–140, Asp-169, Gly-182, Asp-186, and Asn-275 contribute to the substrate site; that span reads LVSGG. Fe cation is bound at residue Asp-302.

This sequence belongs to the KAE1 / TsaD family. Fe(2+) serves as cofactor.

The protein localises to the cytoplasm. It carries out the reaction L-threonylcarbamoyladenylate + adenosine(37) in tRNA = N(6)-L-threonylcarbamoyladenosine(37) in tRNA + AMP + H(+). Its function is as follows. Required for the formation of a threonylcarbamoyl group on adenosine at position 37 (t(6)A37) in tRNAs that read codons beginning with adenine. Is involved in the transfer of the threonylcarbamoyl moiety of threonylcarbamoyl-AMP (TC-AMP) to the N6 group of A37, together with TsaE and TsaB. TsaD likely plays a direct catalytic role in this reaction. This is tRNA N6-adenosine threonylcarbamoyltransferase from Streptococcus agalactiae serotype V (strain ATCC BAA-611 / 2603 V/R).